Consider the following 286-residue polypeptide: MSDYQETLYEGYGQRFRMEKMLHEVRTEHQHLVIFQNPRMGRVMALDGVIQTTEADEFIYHEMLTHVPILAHGAAKRVLIIGGGDGGMLREVAKHLTVEHITMVEIDATVVEMCKEFLPNHSSGAFDDSRLNLVIDDGMRFVATTEEKFDVIISDSTDPIGPGEVLFSENFYQACHRCLNEGGILVTQNGTPFMQLSGVQTTAGRMNGLFADWHFYQAAIPTYIGGAMTFAWGATDKSYRKLPLETLRQRFSGSGIVTRYYNPEVHIGAFALPQYVLHAVNKASND.

The 235-residue stretch at 1–235 (MSDYQETLYE…GAMTFAWGAT (235 aa)) folds into the PABS domain. Residue Q30 coordinates S-methyl-5'-thioadenosine. 2 residues coordinate spermidine: H61 and D85. S-methyl-5'-thioadenosine-binding positions include E105 and 137–138 (DG). Residue D155 is the Proton acceptor of the active site. A spermidine-binding site is contributed by 155–158 (DSTD). An S-methyl-5'-thioadenosine-binding site is contributed by P162.

It belongs to the spermidine/spermine synthase family. As to quaternary structure, homodimer or homotetramer.

Its subcellular location is the cytoplasm. It catalyses the reaction S-adenosyl 3-(methylsulfanyl)propylamine + putrescine = S-methyl-5'-thioadenosine + spermidine + H(+). The protein operates within amine and polyamine biosynthesis; spermidine biosynthesis; spermidine from putrescine: step 1/1. Functionally, catalyzes the irreversible transfer of a propylamine group from the amino donor S-adenosylmethioninamine (decarboxy-AdoMet) to putrescine (1,4-diaminobutane) to yield spermidine. The protein is Polyamine aminopropyltransferase of Pseudomonas syringae pv. tomato (strain ATCC BAA-871 / DC3000).